The chain runs to 1424 residues: ABC multidrug transporter H (1424 aa).

Residues 1–49 (MEDQGHLPSEPRALFDRRDDTDSTNTALDETDLSRTPLQDTSHTPHAED) form a disordered region. Positions 23 to 42 (STNTALDETDLSRTPLQDTS) are enriched in polar residues. Residues Asn-79 and Asn-275 are each glycosylated (N-linked (GlcNAc...) asparagine). In terms of domain architecture, ABC transporter 1 spans 96–351 (LSQFNIPQHI…MEEQGFVCRE (256 aa)). 7 consecutive transmembrane segments (helical) span residues 488-508 (GLFIKSGALFFSLLYNSLLAM), 520-540 (VLIKHKYFAFFHPAAFCIAQI), 544-564 (IPVLLFQISMFAVVVYFMVGL), 569-589 (GAFFSYWIIIFVATMVMTALF), 605-625 (VSGFLISALIMYCGYLEPYHA), 629-649 (WFIWIYWINPLAYAFDALLSI), and 710-730 (NFGILWAWWALFVAVTIIATS). The interval 760 to 782 (EEAQLNEKAGHKGTGTDSEAQSN) is disordered. N-linked (GlcNAc...) asparagine glycosylation is found at Asn-790 and Asn-798. The region spanning 794-1037 (FTWKNLTYTV…VKDYFARYGA (244 aa)) is the ABC transporter 2 domain. 830–837 (GSSGAGKT) contacts ATP. 4 consecutive transmembrane segments (helical) span residues 1131–1151 (IALHIGSALFNGFSFWMIGDS), 1161–1181 (TIFNFIFVAPGVINQLQPLFI), 1200–1220 (VAFVTALIVSEFPYLCVCAVL), and 1240–1260 (AIFFIMLCYEFLYTGIGQFIA). An N-linked (GlcNAc...) asparagine glycan is attached at Asn-1265. Transmembrane regions (helical) follow at residues 1268–1288 (FAALTNPLILGTLVSFCGVLV) and 1300–1320 (WIYWLNPFNYLMGSMLVFSVF). Asn-1338 carries N-linked (GlcNAc...) asparagine glycosylation. Residues 1395 to 1415 (TAIVCIFVLSSYALVYALMKL) form a helical membrane-spanning segment.

Belongs to the ABC transporter superfamily. ABCG family. PDR (TC 3.A.1.205) subfamily.

The protein localises to the cell membrane. Its activity is regulated as follows. The efflux inhibitor FK506 impairs the transport activity. Functionally, ABC efflux transporter that is able to transport rhodamine 6G (R-6G), a known substrate for many ABC transporters, but seems not to transport azoles. The sequence is that of ABC multidrug transporter H from Aspergillus fumigatus (strain ATCC MYA-4609 / CBS 101355 / FGSC A1100 / Af293) (Neosartorya fumigata).